Consider the following 66-residue polypeptide: Large ribosomal subunit protein uL29 (66 aa).

Belongs to the universal ribosomal protein uL29 family.

In Lysinibacillus sphaericus (strain C3-41), this protein is Large ribosomal subunit protein uL29.